The primary structure comprises 356 residues: Phospho-N-acetylmuramoyl-pentapeptide-transferase (356 aa).

The next 10 membrane-spanning stretches (helical) occupy residues 25–45 (TVAA…SIIS), 70–90 (GTPT…ALLW), 93–113 (LFNI…AIGF), 138–158 (FLVA…GLAL), 164–184 (YFIN…VGLG), 195–215 (GLAI…AYLS), 232–252 (VGEL…FLWF), 258–278 (AIFM…IVSV), 284–304 (IVLI…IIQV), and 333–353 (QIVV…LSTL).

This sequence belongs to the glycosyltransferase 4 family. MraY subfamily. It depends on Mg(2+) as a cofactor.

Its subcellular location is the cell inner membrane. The catalysed reaction is UDP-N-acetyl-alpha-D-muramoyl-L-alanyl-gamma-D-glutamyl-meso-2,6-diaminopimeloyl-D-alanyl-D-alanine + di-trans,octa-cis-undecaprenyl phosphate = di-trans,octa-cis-undecaprenyl diphospho-N-acetyl-alpha-D-muramoyl-L-alanyl-D-glutamyl-meso-2,6-diaminopimeloyl-D-alanyl-D-alanine + UMP. It functions in the pathway cell wall biogenesis; peptidoglycan biosynthesis. Its function is as follows. Catalyzes the initial step of the lipid cycle reactions in the biosynthesis of the cell wall peptidoglycan: transfers peptidoglycan precursor phospho-MurNAc-pentapeptide from UDP-MurNAc-pentapeptide onto the lipid carrier undecaprenyl phosphate, yielding undecaprenyl-pyrophosphoryl-MurNAc-pentapeptide, known as lipid I. The sequence is that of Phospho-N-acetylmuramoyl-pentapeptide-transferase from Bartonella bacilliformis (strain ATCC 35685 / KC583 / Herrer 020/F12,63).